The sequence spans 188 residues: Peptidyl-tRNA hydrolase (188 aa).

Tyr14 contributes to the tRNA binding site. The Proton acceptor role is filled by His19. Tyr64, Asn66, and Asn112 together coordinate tRNA.

Belongs to the PTH family. In terms of assembly, monomer.

It is found in the cytoplasm. The catalysed reaction is an N-acyl-L-alpha-aminoacyl-tRNA + H2O = an N-acyl-L-amino acid + a tRNA + H(+). In terms of biological role, hydrolyzes ribosome-free peptidyl-tRNAs (with 1 or more amino acids incorporated), which drop off the ribosome during protein synthesis, or as a result of ribosome stalling. Functionally, catalyzes the release of premature peptidyl moieties from peptidyl-tRNA molecules trapped in stalled 50S ribosomal subunits, and thus maintains levels of free tRNAs and 50S ribosomes. This chain is Peptidyl-tRNA hydrolase, found in Clostridium perfringens (strain ATCC 13124 / DSM 756 / JCM 1290 / NCIMB 6125 / NCTC 8237 / Type A).